The sequence spans 131 residues: Protein Bouncer (131 aa).

The first 26 residues, 1-26 (MGSLRTRQLFHAALLWLCLPLPLLLC), serve as a signal peptide directing secretion. 4 disulfides stabilise this stretch: Cys-31/Cys-56, Cys-50/Cys-74, Cys-80/Cys-99, and Cys-100/Cys-105. Positions 31-106 (CYYSPVLEKE…YSCCDWPYCN (76 aa)) constitute a UPAR/Ly6 domain. A glycan (N-linked (GlcNAc...) asparagine) is linked at Asn-65. A lipid anchor (GPI-anchor amidated asparagine) is attached at Asn-106. A propeptide spans 107 to 131 (RAVALEPLTAMLVAAAVVACSFCLT) (removed in mature form).

The protein belongs to the SPACA4/bouncer family. In terms of assembly, interacts with spermatocyte complex composed of izumo1, spaca6 and tmem81. Expressed in oocytes. Not expressed in testis.

The protein resides in the cell membrane. In terms of biological role, oocyte-expressed fertilization factor that mediates sperm-egg binding and is essential for sperm entry into the egg. Necessary and sufficient to mediate species-specific gamete recognition and fertilization, which is essential for vertebrate species performing external fertilization. External fertilization cannot guarantee that only conspecific sperm reaches the egg by precopulatory mate choice: proteins such as Bouncer can therefore support the selection of conspecific sperm. This chain is Protein Bouncer, found in Oryzias latipes (Japanese rice fish).